The chain runs to 654 residues: MSEASSEDLVPPLEAGAAPYREEEEAAKKKKEKKKKSKGLANVFCVFTKGKKKKGQPSSAEPEDAAGSRQGLDGPPPTVEELKAALERGQLEAARPLLALERELAAAAAAGGVSEEELVRRQSKVEALYELLRDQVLGVLRRPLEAPPERLRQALAVVAEQEREDRQAAAAGPGTSGLAATRPRRWLQLWRRGVAEAAEERMGQRPAAGAEVPESVFLHLGRTMKEDLEAVVERLKPLFPAEFGVVAAYAESYHQHFAAHLAAVAQFELCERDTYMLLLWVQNLYPNDIINSPKLVGELQGMGLGSLLPPRQIRLLEATFLSSEAANVRELMDRALELEARRWAEDVPPQRLDGHCHSELAIDIIQITSQAQAKAESITLDLGSQIKRVLLVELPAFLRSYQRAFNEFLERGKQLTNYRANVIANINNCLSFRMSMEQNWQVPQDTLSLLLGPLGELKSHGFDTLLQNLHEDLKPLFKRFTHTRWAAPVETLENIIATVDTRLPEFSELQGCFREELMEALHLHLVKEYIIQLSKGRLVLKTAEQQQQLAGYILANADTIQHFCTQHGSPATWLQPALPTLAEIIRLQDPSAIKIEVATYATCYPDFSKGHLSAILAIKGNLSNSEVKRIRSILDVSMGAQEPSRPLFSLIKVG.

Disordered regions lie at residues 1 to 38 (MSEA…KKSK) and 50 to 78 (GKKK…PPPT). Positions 28–38 (KKKKEKKKKSK) are enriched in basic residues.

The protein belongs to the SEC6 family.

May play a role as a mediator of inflammation and angiogenesis. This Homo sapiens (Human) protein is Tumor necrosis factor alpha-induced protein 2 (TNFAIP2).